A 476-amino-acid polypeptide reads, in one-letter code: MATIDNAMIHSLIQHLGGKSNIQSVTNCMTRLRVTLHDSSVVDKDELKKIQGVLGVVEADEQLQLILGPGKATKAAEMMKASLGDNMSSPSLQEIARTQKQQIKSAQTSSIHQFFAKFATIFTPLIPGFIGAGLLLGLATVLQQAFVAGVENPNAFLVDLIAYMKVFSKGLFSFLSILIGYNAAKAFGGSGVNGAILASLFILGYNPEATKGIYSGLSNFFGLTIDPRGNIIGVLIAAIVGAKVERWVRKFIPDSLDMALTSTVTLLIMGCFTFLFIMPIGVYLFNGMSWLFSNLNGNPLGTAVLAGLFLISVMLGIHQGFVPVYFALVETQGFNALFPVLAMAGAGQVGAALALYFKANKGAVLRDQIKGAIIPGFLGIGEPLIYGVTLPRVKPFITACIGGAAGGFTIGLIAYLGFPMGLNTVFGPSGLLAIPLMTSPNGVLPAIATYLLGTVVAYATGFITTYFFATKDVDLS.

In terms of domain architecture, PTS EIIB type-1 spans 1 to 89; the sequence is MATIDNAMIH…KASLGDNMSS (89 aa). Cys-28 serves as the catalytic Phosphocysteine intermediate; for EIIB activity. The 361-residue stretch at 116 to 476 folds into the PTS EIIC type-1 domain; the sequence is AKFATIFTPL…FFATKDVDLS (361 aa). Transmembrane regions (helical) follow at residues 118-138, 160-180, 186-206, 220-240, 265-285, 304-324, 337-357, 371-391, 396-416, and 443-463; these read FATIFTPLIPGFIGAGLLLGL, LIAYMKVFSKGLFSFLSILIG, AFGGSGVNGAILASLFILGYN, FFGLTIDPRGNIIGVLIAAIV, TLLIMGCFTFLFIMPIGVYLF, VLAGLFLISVMLGIHQGFVPV, LFPVLAMAGAGQVGAALALYF, GAIIPGFLGIGEPLIYGVTLP, FITACIGGAAGGFTIGLIAYL, and VLPAIATYLLGTVVAYATGFI.

The protein resides in the cell inner membrane. The enzyme catalyses N-acetyl-beta-D-muramate(out) + N(pros)-phospho-L-histidyl-[protein] = N-acetyl-beta-D-muramate 6-phosphate(in) + L-histidyl-[protein]. The phosphoenolpyruvate-dependent sugar phosphotransferase system (sugar PTS), a major carbohydrate active transport system, catalyzes the phosphorylation of incoming sugar substrates concomitantly with their translocation across the cell membrane. This system is involved in N-acetylmuramic acid (MurNAc) transport, yielding cytoplasmic MurNAc-6-P. Is also able to take up anhydro-N-acetylmuramic acid (anhMurNAc), but cannot phosphorylate the carbon 6, probably because of the 1,6-anhydro ring. The sequence is that of PTS system N-acetylmuramic acid-specific EIIBC component (murP) from Pasteurella multocida (strain Pm70).